Reading from the N-terminus, the 150-residue chain is 3-hydroxyacyl-[acyl-carrier-protein] dehydratase FabZ (150 aa).

Histidine 54 is a catalytic residue.

Belongs to the thioester dehydratase family. FabZ subfamily.

It is found in the cytoplasm. It catalyses the reaction a (3R)-hydroxyacyl-[ACP] = a (2E)-enoyl-[ACP] + H2O. In terms of biological role, involved in unsaturated fatty acids biosynthesis. Catalyzes the dehydration of short chain beta-hydroxyacyl-ACPs and long chain saturated and unsaturated beta-hydroxyacyl-ACPs. This Vibrio vulnificus (strain CMCP6) protein is 3-hydroxyacyl-[acyl-carrier-protein] dehydratase FabZ.